The primary structure comprises 182 residues: Biotin transporter BioY2 (182 aa).

A run of 5 helical transmembrane segments spans residues 12 to 32 (IALG…IGIV), 54 to 74 (FFAI…FTGG), 78 to 98 (IAVL…MGTL), 111 to 131 (IPAF…GTLW), and 150 to 170 (PFVF…LALI).

It belongs to the BioY family. In terms of assembly, in E.coli forms a stable energy-coupling factor (ECF) transporter complex composed of 2 membrane-embedded substrate-binding protein (S component), 2 ATP-binding proteins (A and A' components) and 2 transmembrane proteins (T component), probably with a stoichiometry of 2:1:1:2. May be able to interact with more than 1 S component at a time.

The protein resides in the cell membrane. Probably a biotin-binding protein that interacts with the energy-coupling factor (ECF) ABC-transporter complex. Unlike classic ABC transporters this ECF transporter provides the energy necessary to transport a number of different substrates. The substrates themselves are bound by transmembrane, not extracytoplasmic soluble proteins. The chain is Biotin transporter BioY2 (bioY2) from Lactococcus lactis subsp. cremoris (strain MG1363).